The sequence spans 535 residues: Beta-amylase 1, chloroplastic (535 aa).

A chloroplast-targeting transit peptide spans methionine 1 to serine 36. Substrate is bound by residues aspartate 115, histidine 155, and aspartate 163. Glutamate 247 (proton donor) is an active-site residue. Residues lysine 361, histidine 366, and threonine 408 each contribute to the substrate site. The Proton acceptor role is filled by glutamate 446. Substrate-binding positions include asparagine 447 to alanine 448 and arginine 480.

Belongs to the glycosyl hydrolase 14 family.

It localises to the plastid. The protein resides in the chloroplast. It carries out the reaction Hydrolysis of (1-&gt;4)-alpha-D-glucosidic linkages in polysaccharides so as to remove successive maltose units from the non-reducing ends of the chains.. Possesses beta-amylase activity in vitro. May be involved in cold resistance by mediating the accumulation of maltose upon freezing stress, thus contributing to the protection of membranes. The polypeptide is Beta-amylase 1, chloroplastic (Oryza sativa subsp. japonica (Rice)).